A 404-amino-acid polypeptide reads, in one-letter code: Neutral protease 2 homolog AFLA_065450 (404 aa).

Residues 1–19 form the signal peptide; that stretch reads MRFISASSLLLALAPTLNA. The propeptide occupies 20 to 185; it reads VPVEVAGSAQ…TQAVKILERR (166 aa). 2 cysteine pairs are disulfide-bonded: cysteine 191–cysteine 263 and cysteine 270–cysteine 288. Histidine 313 contacts Zn(2+). Residue glutamate 314 is part of the active site. Zn(2+)-binding residues include histidine 317 and aspartate 328.

The protein belongs to the peptidase M35 family. The cofactor is Zn(2+).

The protein localises to the secreted. It catalyses the reaction Preferential cleavage of bonds with hydrophobic residues in P1'. Also 3-Asn-|-Gln-4 and 8-Gly-|-Ser-9 bonds in insulin B chain.. Functionally, secreted metalloproteinase that allows assimilation of proteinaceous substrates. Shows high activities on basic nuclear substrates such as histone and protamine. The protein is Neutral protease 2 homolog AFLA_065450 of Aspergillus flavus (strain ATCC 200026 / FGSC A1120 / IAM 13836 / NRRL 3357 / JCM 12722 / SRRC 167).